Reading from the N-terminus, the 655-residue chain is Probable replication factor A 73 kDa subunit (655 aa).

The disordered stretch occupies residues 195-217; that stretch reads NRAAAPEATRARAVPPPARRTAS. The segment covering 196–207 has biased composition (low complexity); sequence RAAAPEATRARA. A DNA-binding region (OB) is located at residues 236–326; the sequence is FKIHGMVSRK…TLRSDSIIEA (91 aa). A C4-type zinc finger spans residues 518 to 539; sequence CASEGCQKKLVGENGDYRCEKC.

This sequence belongs to the replication factor A protein 1 family. In terms of assembly, component of the heterotrimeric canonical replication protein A complex (RPA).

The protein localises to the nucleus. Functionally, as part of the heterotrimeric replication protein A complex (RPA/RP-A), binds and stabilizes single-stranded DNA intermediates, that form during DNA replication or upon DNA stress. It prevents their reannealing and in parallel, recruits and activates different proteins and complexes involved in DNA metabolism. Thereby, it plays an essential role both in DNA replication and the cellular response to DNA damage. This chain is Probable replication factor A 73 kDa subunit, found in Caenorhabditis elegans.